Reading from the N-terminus, the 155-residue chain is 2-C-methyl-D-erythritol 2,4-cyclodiphosphate synthase (155 aa).

2 residues coordinate a divalent metal cation: aspartate 8 and histidine 10. Residues 8–10 and 34–35 contribute to the 4-CDP-2-C-methyl-D-erythritol 2-phosphate site; these read DVH and HS. Histidine 42 serves as a coordination point for a divalent metal cation. Residues 56 to 58, 61 to 65, 132 to 135, phenylalanine 139, and arginine 142 contribute to the 4-CDP-2-C-methyl-D-erythritol 2-phosphate site; these read DIG, FPDSD, and TTEE.

The protein belongs to the IspF family. Homotrimer. It depends on a divalent metal cation as a cofactor.

The enzyme catalyses 4-CDP-2-C-methyl-D-erythritol 2-phosphate = 2-C-methyl-D-erythritol 2,4-cyclic diphosphate + CMP. It participates in isoprenoid biosynthesis; isopentenyl diphosphate biosynthesis via DXP pathway; isopentenyl diphosphate from 1-deoxy-D-xylulose 5-phosphate: step 4/6. In terms of biological role, involved in the biosynthesis of isopentenyl diphosphate (IPP) and dimethylallyl diphosphate (DMAPP), two major building blocks of isoprenoid compounds. Catalyzes the conversion of 4-diphosphocytidyl-2-C-methyl-D-erythritol 2-phosphate (CDP-ME2P) to 2-C-methyl-D-erythritol 2,4-cyclodiphosphate (ME-CPP) with a corresponding release of cytidine 5-monophosphate (CMP). The polypeptide is 2-C-methyl-D-erythritol 2,4-cyclodiphosphate synthase (Clostridium acetobutylicum (strain ATCC 824 / DSM 792 / JCM 1419 / IAM 19013 / LMG 5710 / NBRC 13948 / NRRL B-527 / VKM B-1787 / 2291 / W)).